A 200-amino-acid chain; its full sequence is Alpha-amylase/subtilisin inhibitor (200 aa).

Positions 1-22 are cleaved as a signal peptide; the sequence is MVSLRLPLILLSLLAISFSCSA. 2 disulfides stabilise this stretch: Cys-63/Cys-112 and Cys-162/Cys-166.

It belongs to the protease inhibitor I3 (leguminous Kunitz-type inhibitor) family.

Its function is as follows. This protein inhibits independently subtilisin and T.castaneum alpha-amylase but not barley alpha-amylase. The chain is Alpha-amylase/subtilisin inhibitor (RASI) from Oryza sativa subsp. japonica (Rice).